Here is a 240-residue protein sequence, read N- to C-terminus: MRTLFIGDLHLSADRLDITQAFTRFLDTELDDADALYILGDLFEVWVGDDIALPFALELAEKLKQVSQKLPVYFIHGNRDFMLGKQFARAAGMQILPEVKCLNLYGIETVILHGDSLCTLDKAYQRFRKLRSLSLARWLYGCLSKKTRQGIADKIRSNSKSSNQQKSYTIMDVEPNAVDALFAKTHTKHMIHGHTHRPAIHQLANGCQRIVVGDWYEQGSVLSVSAEGINLQSLPFEQAT.

Mn(2+) is bound by residues aspartate 8, histidine 10, aspartate 41, asparagine 78, and histidine 113. 78–79 serves as a coordination point for substrate; the sequence is NR. Substrate is bound by residues aspartate 121, serine 159, asparagine 163, lysine 166, and histidine 194. Mn(2+) contacts are provided by histidine 194 and histidine 196.

It belongs to the LpxH family. The cofactor is Mn(2+).

Its subcellular location is the cell inner membrane. It catalyses the reaction UDP-2-N,3-O-bis[(3R)-3-hydroxytetradecanoyl]-alpha-D-glucosamine + H2O = 2-N,3-O-bis[(3R)-3-hydroxytetradecanoyl]-alpha-D-glucosaminyl 1-phosphate + UMP + 2 H(+). The protein operates within glycolipid biosynthesis; lipid IV(A) biosynthesis; lipid IV(A) from (3R)-3-hydroxytetradecanoyl-[acyl-carrier-protein] and UDP-N-acetyl-alpha-D-glucosamine: step 4/6. Functionally, hydrolyzes the pyrophosphate bond of UDP-2,3-diacylglucosamine to yield 2,3-diacylglucosamine 1-phosphate (lipid X) and UMP by catalyzing the attack of water at the alpha-P atom. Involved in the biosynthesis of lipid A, a phosphorylated glycolipid that anchors the lipopolysaccharide to the outer membrane of the cell. In Shewanella baltica (strain OS223), this protein is UDP-2,3-diacylglucosamine hydrolase.